A 492-amino-acid polypeptide reads, in one-letter code: MSTANKHPEAASLNAFKQPRSFYLIFSIELWERFGYYGLQGIMAVYLVKMLGMSEAQSITLFASFSALVYGLIAVGGWLGDKVLGTKRVIVLGTLVLALGYALVAWSGHDIAMIYFGMATIAVGNGLFKANPSSLLSTCYEKDDPRLDGAFTMYYMAINIGSFFSMLATPWLAAQFGWSTAFGLSFVGMLITLVNFMFFRKWVKDHGSKPDFAPLNMGKLLVTLLGIAVMIAAATWLLHNQDIARMVLGAVAVAIVVIFTKEALTLKGAARRKMIVAFLLMLEAIVFFVLYMQMPTSLNFFAIRNVEHSLLGIAFQPEQFQALNPFWIMIFSPLLAALYNKLGDRMPMPHKFALGMVLCSAAFLVLPLGASLANKMGIVSVGWLVLSYALQSVGELMISGLGLAMVAQLVPQRLMGFIMGSWFLTTAGAAMVAGKVANLMAVPENITNPLLSLHVYGDIFFKIGITTGVIAVLMILAAPLLNRMTQDEQPGV.

Residues 1–20 are Cytoplasmic-facing; sequence MSTANKHPEAASLNAFKQPR. The helical transmembrane segment at 21-43 threads the bilayer; it reads SFYLIFSIELWERFGYYGLQGIM. At 44–58 the chain is on the periplasmic side; sequence AVYLVKMLGMSEAQS. A helical membrane pass occupies residues 59–79; sequence ITLFASFSALVYGLIAVGGWL. Topologically, residues 80–88 are cytoplasmic; the sequence is GDKVLGTKR. The chain crosses the membrane as a helical span at residues 89-109; sequence VIVLGTLVLALGYALVAWSGH. Asp110 is a topological domain (periplasmic). Residues 111 to 131 form a helical membrane-spanning segment; that stretch reads IAMIYFGMATIAVGNGLFKAN. Topologically, residues 132-152 are cytoplasmic; that stretch reads PSSLLSTCYEKDDPRLDGAFT. The helical transmembrane segment at 153–173 threads the bilayer; the sequence is MYYMAINIGSFFSMLATPWLA. Residues 174-178 are Periplasmic-facing; it reads AQFGW. Residues 179–199 form a helical membrane-spanning segment; it reads STAFGLSFVGMLITLVNFMFF. At 200-217 the chain is on the cytoplasmic side; the sequence is RKWVKDHGSKPDFAPLNM. The helical transmembrane segment at 218 to 238 threads the bilayer; that stretch reads GKLLVTLLGIAVMIAAATWLL. The Periplasmic portion of the chain corresponds to 239–245; the sequence is HNQDIAR. A helical transmembrane segment spans residues 246–266; it reads MVLGAVAVAIVVIFTKEALTL. Over 267–273 the chain is Cytoplasmic; that stretch reads KGAARRK. A helical transmembrane segment spans residues 274–294; that stretch reads MIVAFLLMLEAIVFFVLYMQM. Residues 295–319 are Periplasmic-facing; it reads PTSLNFFAIRNVEHSLLGIAFQPEQ. The chain crosses the membrane as a helical span at residues 320–340; the sequence is FQALNPFWIMIFSPLLAALYN. Residues 341-351 lie on the Cytoplasmic side of the membrane; the sequence is KLGDRMPMPHK. The helical transmembrane segment at 352 to 372 threads the bilayer; sequence FALGMVLCSAAFLVLPLGASL. The Periplasmic segment spans residues 373–377; it reads ANKMG. The helical transmembrane segment at 378 to 398 threads the bilayer; the sequence is IVSVGWLVLSYALQSVGELMI. The Cytoplasmic segment spans residues 399–413; it reads SGLGLAMVAQLVPQR. Residues 414–434 form a helical membrane-spanning segment; the sequence is LMGFIMGSWFLTTAGAAMVAG. At 435 to 458 the chain is on the periplasmic side; that stretch reads KVANLMAVPENITNPLLSLHVYGD. The helical transmembrane segment at 459–479 threads the bilayer; the sequence is IFFKIGITTGVIAVLMILAAP. Over 480-492 the chain is Cytoplasmic; sequence LLNRMTQDEQPGV.

The protein belongs to the major facilitator superfamily. Proton-dependent oligopeptide transporter (POT/PTR) (TC 2.A.17) family. DtpA subfamily.

The protein localises to the cell inner membrane. Proton-dependent permease that transports di- and tripeptides. This Erwinia pyrifoliae (strain DSM 12163 / CIP 106111 / Ep16/96) protein is Dipeptide and tripeptide permease A.